The following is a 103-amino-acid chain: Small ribosomal subunit protein uS10 (103 aa).

The protein belongs to the universal ribosomal protein uS10 family. Part of the 30S ribosomal subunit.

Functionally, involved in the binding of tRNA to the ribosomes. This is Small ribosomal subunit protein uS10 from Ralstonia pickettii (strain 12J).